A 303-amino-acid chain; its full sequence is Putative S-adenosyl-L-methionine-dependent methyltransferase MAP_4197c (303 aa).

S-adenosyl-L-methionine contacts are provided by residues aspartate 129 and 158–159 (DL).

It belongs to the UPF0677 family.

In terms of biological role, exhibits S-adenosyl-L-methionine-dependent methyltransferase activity. The protein is Putative S-adenosyl-L-methionine-dependent methyltransferase MAP_4197c of Mycolicibacterium paratuberculosis (strain ATCC BAA-968 / K-10) (Mycobacterium paratuberculosis).